Reading from the N-terminus, the 77-residue chain is Metallothionein-like protein 2 (77 aa).

This sequence belongs to the metallothionein superfamily. Type 15 family.

Metallothioneins have a high content of cysteine residues that bind various heavy metals. This chain is Metallothionein-like protein 2 (MT1A), found in Trifolium repens (Creeping white clover).